A 576-amino-acid polypeptide reads, in one-letter code: Arginine--tRNA ligase (576 aa).

The short motif at 122 to 132 is the 'HIGH' region element; the sequence is PNVAKQMHVGH.

This sequence belongs to the class-I aminoacyl-tRNA synthetase family. As to quaternary structure, monomer.

The protein localises to the cytoplasm. The catalysed reaction is tRNA(Arg) + L-arginine + ATP = L-arginyl-tRNA(Arg) + AMP + diphosphate. The protein is Arginine--tRNA ligase of Proteus mirabilis (strain HI4320).